The sequence spans 249 residues: Homeobox-leucine zipper protein HOX6 (249 aa).

Positions 1-32 (MDGEEDSEWMMMDVGGKGGKGGGGGGAADRKK) are disordered. A compositionally biased stretch (gly residues) spans 15-27 (GGKGGKGGGGGGA). Residues 27-86 (AADRKKRFSEEQIKSLESMFATQTKLEPRQKLQLARELGLQPRQVAIWFQNKRARWKSKQ) constitute a DNA-binding region (homeobox). The interval 85–129 (KQLEREYSALRDDYDALLCSYESLKKEKLALIKQLEKLAEMLQEP) is leucine-zipper. The disordered stretch occupies residues 194-249 (FLRPSSQHHPPPPHAGAGFTSSEPAADHQSFNFHSSWPSSTEQTCSSTPWWEFESE). Polar residues predominate over residues 212–242 (FTSSEPAADHQSFNFHSSWPSSTEQTCSSTP).

This sequence belongs to the HD-ZIP homeobox family. Class I subfamily. As to expression, expressed in seedlings, roots, leaves, nodes, internodes, flowers and embryo.

It is found in the nucleus. Probable transcription factor that binds to the DNA sequence 5'-CAAT[AT]ATTG-3'. The chain is Homeobox-leucine zipper protein HOX6 (HOX6) from Oryza sativa subsp. indica (Rice).